Consider the following 188-residue polypeptide: Probable nicotinate-nucleotide adenylyltransferase (188 aa).

This sequence belongs to the NadD family.

It carries out the reaction nicotinate beta-D-ribonucleotide + ATP + H(+) = deamido-NAD(+) + diphosphate. Its pathway is cofactor biosynthesis; NAD(+) biosynthesis; deamido-NAD(+) from nicotinate D-ribonucleotide: step 1/1. Functionally, catalyzes the reversible adenylation of nicotinate mononucleotide (NaMN) to nicotinic acid adenine dinucleotide (NaAD). The protein is Probable nicotinate-nucleotide adenylyltransferase of Listeria welshimeri serovar 6b (strain ATCC 35897 / DSM 20650 / CCUG 15529 / CIP 8149 / NCTC 11857 / SLCC 5334 / V8).